A 362-amino-acid polypeptide reads, in one-letter code: GDSL esterase/lipase At5g45670 (362 aa).

Positions M1–S23 are cleaved as a signal peptide. The active-site Nucleophile is S36. Catalysis depends on residues D326 and H329.

It belongs to the 'GDSL' lipolytic enzyme family.

It localises to the secreted. The chain is GDSL esterase/lipase At5g45670 from Arabidopsis thaliana (Mouse-ear cress).